Here is a 277-residue protein sequence, read N- to C-terminus: Putative thiosulfate sulfurtransferase mpst-4 (277 aa).

Rhodanese domains follow at residues 15-153 (NFGN…VVQS) and 155-243 (SKAE…QHLN). The Cysteine persulfide intermediate role is filled by Cys-204.

The catalysed reaction is thiosulfate + hydrogen cyanide = thiocyanate + sulfite + 2 H(+). The chain is Putative thiosulfate sulfurtransferase mpst-4 from Caenorhabditis elegans.